A 484-amino-acid polypeptide reads, in one-letter code: Dual specificity protein kinase CLK1 (484 aa).

The disordered stretch occupies residues 1-42; it reads MRHSKRTYCPDWDDKDWDYGKWRSSSSHKRRKRSHSSAQENK. Residues 26–35 are compositionally biased toward basic residues; the sequence is SSHKRRKRSH. Residue serine 61 is modified to Phosphoserine. A disordered region spans residues 79-146; sequence DYTQGCEPGH…RTRSVEDDEE (68 aa). The segment covering 86–97 has biased composition (basic and acidic residues); sequence PGHRQRDHESRY. Positions 100–112 are enriched in low complexity; it reads HSSKSSGRSGRSS. Positions 113 to 138 are enriched in basic residues; it reads YKSKHRIHHSTSHRRSHGKSHRRKRT. The residue at position 138 (threonine 138) is a Phosphothreonine. Residue serine 140 is modified to Phosphoserine. A Protein kinase domain is found at 161 to 477; that stretch reads YEIVDTLGEG…LREALKHPFF (317 aa). ATP is bound by residues 167–175 and lysine 191; that span reads LGEGAFGKV. Residue aspartate 288 is the Proton acceptor of the active site.

This sequence belongs to the protein kinase superfamily. CMGC Ser/Thr protein kinase family. Lammer subfamily. In terms of assembly, interacts with PPIG and UBL5. Autophosphorylates on all three types of residues. Endothelial cells.

It localises to the nucleus. The catalysed reaction is L-seryl-[protein] + ATP = O-phospho-L-seryl-[protein] + ADP + H(+). It carries out the reaction L-threonyl-[protein] + ATP = O-phospho-L-threonyl-[protein] + ADP + H(+). It catalyses the reaction L-tyrosyl-[protein] + ATP = O-phospho-L-tyrosyl-[protein] + ADP + H(+). Regulates splicing of its own pre-mRNA according to its kinase activity; increased expression of the catalytically active form influences splicing to generate the catalytically inactive splicing variant lacking the kinase domain. Leucettine L41 inhibits its kinase activity and affects the regulation of alternative splicing mediated by phosphorylation of SR proteins. Its function is as follows. Dual specificity kinase acting on both serine/threonine and tyrosine-containing substrates. Phosphorylates serine- and arginine-rich (SR) proteins of the spliceosomal complex and may be a constituent of a network of regulatory mechanisms that enable SR proteins to control RNA splicing. Phosphorylates: SRSF1, SRSF3 and PTPN1. Regulates the alternative splicing of tissue factor (F3) pre-mRNA in endothelial cells. The sequence is that of Dual specificity protein kinase CLK1 from Homo sapiens (Human).